Consider the following 237-residue polypeptide: Sugar fermentation stimulation protein homolog (237 aa).

This sequence belongs to the SfsA family.

In Pseudomonas fluorescens (strain Pf0-1), this protein is Sugar fermentation stimulation protein homolog.